A 508-amino-acid chain; its full sequence is Photosystem II CP47 reaction center protein (508 aa).

6 helical membrane-spanning segments follow: residues 21–36, 101–115, 140–156, 203–218, 237–252, and 457–472; these read SVHI…WAGS, IVFS…IWHW, GIHL…FGAF, IAAG…FHLS, VLSS…AFVV, and SFAL…HGAR.

It belongs to the PsbB/PsbC family. PsbB subfamily. As to quaternary structure, PSII is composed of 1 copy each of membrane proteins PsbA, PsbB, PsbC, PsbD, PsbE, PsbF, PsbH, PsbI, PsbJ, PsbK, PsbL, PsbM, PsbT, PsbX, PsbY, PsbZ, Psb30/Ycf12, at least 3 peripheral proteins of the oxygen-evolving complex and a large number of cofactors. It forms dimeric complexes. It depends on Binds multiple chlorophylls. PSII binds additional chlorophylls, carotenoids and specific lipids. as a cofactor.

The protein localises to the plastid. It localises to the chloroplast thylakoid membrane. Functionally, one of the components of the core complex of photosystem II (PSII). It binds chlorophyll and helps catalyze the primary light-induced photochemical processes of PSII. PSII is a light-driven water:plastoquinone oxidoreductase, using light energy to abstract electrons from H(2)O, generating O(2) and a proton gradient subsequently used for ATP formation. This Nuphar advena (Common spatterdock) protein is Photosystem II CP47 reaction center protein.